Here is a 147-residue protein sequence, read N- to C-terminus: Globin (147 aa).

In terms of domain architecture, Globin spans 2 to 147 (SFSAAQVDTV…SVANGIGQYQ (146 aa)). Heme b is bound by residues H64 and H95.

This sequence belongs to the globin family. Homodimer or homooligomer.

The chain is Globin from Aequiyoldia eightsii (Antarctic yoldia).